Reading from the N-terminus, the 122-residue chain is Large ribosomal subunit protein bL12 (122 aa).

This sequence belongs to the bacterial ribosomal protein bL12 family. In terms of assembly, homodimer. Part of the ribosomal stalk of the 50S ribosomal subunit. Forms a multimeric L10(L12)X complex, where L10 forms an elongated spine to which 2 to 4 L12 dimers bind in a sequential fashion. Binds GTP-bound translation factors.

Forms part of the ribosomal stalk which helps the ribosome interact with GTP-bound translation factors. Is thus essential for accurate translation. The chain is Large ribosomal subunit protein bL12 from Xylella fastidiosa (strain 9a5c).